Here is a 560-residue protein sequence, read N- to C-terminus: Membrane protein insertase YidC (560 aa).

6 helical membrane-spanning segments follow: residues 5-25, 334-354, 357-377, 431-451, 476-496, and 522-542; these read IINL…WQYF, AIDF…MNFF, YVGN…LLMF, LPIL…YVTI, LFGL…WPIL, and FMPL…LIYW.

The protein belongs to the OXA1/ALB3/YidC family. Type 1 subfamily. As to quaternary structure, interacts with the Sec translocase complex via SecD. Specifically interacts with transmembrane segments of nascent integral membrane proteins during membrane integration.

It localises to the cell inner membrane. Required for the insertion and/or proper folding and/or complex formation of integral membrane proteins into the membrane. Involved in integration of membrane proteins that insert both dependently and independently of the Sec translocase complex, as well as at least some lipoproteins. Aids folding of multispanning membrane proteins. This chain is Membrane protein insertase YidC, found in Rickettsia rickettsii (strain Iowa).